The primary structure comprises 365 residues: Phospho-N-acetylmuramoyl-pentapeptide-transferase (365 aa).

10 helical membrane passes run 22-42 (YISV…LALG), 74-94 (TMGG…WGDL), 95-115 (TSIY…IGFF), 134-154 (KFAL…YLLS), 168-188 (SLYI…IING), 201-221 (GLAI…AYIE), 240-260 (LAEV…FLWF), 267-287 (VFMG…IAVM), 292-312 (LIFF…MLQV), and 342-362 (KVVI…LAAI).

Belongs to the glycosyltransferase 4 family. MraY subfamily. The cofactor is Mg(2+).

The protein resides in the cell inner membrane. It carries out the reaction UDP-N-acetyl-alpha-D-muramoyl-L-alanyl-gamma-D-glutamyl-meso-2,6-diaminopimeloyl-D-alanyl-D-alanine + di-trans,octa-cis-undecaprenyl phosphate = di-trans,octa-cis-undecaprenyl diphospho-N-acetyl-alpha-D-muramoyl-L-alanyl-D-glutamyl-meso-2,6-diaminopimeloyl-D-alanyl-D-alanine + UMP. It participates in cell wall biogenesis; peptidoglycan biosynthesis. Functionally, catalyzes the initial step of the lipid cycle reactions in the biosynthesis of the cell wall peptidoglycan: transfers peptidoglycan precursor phospho-MurNAc-pentapeptide from UDP-MurNAc-pentapeptide onto the lipid carrier undecaprenyl phosphate, yielding undecaprenyl-pyrophosphoryl-MurNAc-pentapeptide, known as lipid I. This chain is Phospho-N-acetylmuramoyl-pentapeptide-transferase, found in Francisella tularensis subsp. novicida (strain U112).